Reading from the N-terminus, the 338-residue chain is Palmitoyltransferase ZDHHC15 (338 aa).

Topologically, residues 1–20 are cytoplasmic; sequence MLAGCRVALPRGLRCCQRVL. A helical membrane pass occupies residues 21–41; the sequence is SWVPVVIISLVVLWSYYAYVW. The Lumenal portion of the chain corresponds to 42-56; sequence ELCLVTVTNPAEKAA. A helical transmembrane segment spans residues 57 to 77; sequence YLLIFHTVFLLFIWTYWKAIF. Over 78-172 the chain is Cytoplasmic; it reads TPPKQPTKKF…NNCIGYSNYK (95 aa). The DHHC domain occupies 129 to 179; the sequence is RFCDTCQMVKPDRCHHCSVCGMCVLKMDHHCPWVNNCIGYSNYKFFLLFLA. Residues Cys-131, Cys-134, His-144, Cys-145, Cys-148, Cys-151, and His-158 each contribute to the Zn(2+) site. Cys-159 functions as the S-palmitoyl cysteine intermediate in the catalytic mechanism. Residue Cys-165 coordinates Zn(2+). The helical transmembrane segment at 173-193 threads the bilayer; that stretch reads FFLLFLAYAMLYCLYIGCTVF. Residues 194 to 210 lie on the Lumenal side of the membrane; the sequence is QYFILYWTDTLSNGRAK. A helical membrane pass occupies residues 211 to 234; that stretch reads FHVLFLLFVALMFFISLMFLFGYH. The Cytoplasmic portion of the chain corresponds to 235 to 338; that stretch reads CWLVSLNRTT…TSHITVHIEK (104 aa).

This sequence belongs to the DHHC palmitoyltransferase family. In terms of processing, autopalmitoylated (in vitro).

It localises to the golgi apparatus membrane. The protein resides in the postsynaptic density. It carries out the reaction L-cysteinyl-[protein] + hexadecanoyl-CoA = S-hexadecanoyl-L-cysteinyl-[protein] + CoA. The catalysed reaction is L-cysteinyl-[protein] + tetradecanoyl-CoA = S-tetradecanoyl-L-cysteinyl-[protein] + CoA. It catalyses the reaction L-cysteinyl-[protein] + octadecanoyl-CoA = S-octadecanoyl-L-cysteinyl-[protein] + CoA. Its function is as follows. Palmitoyltransferase that catalyzes the addition of palmitate onto various protein substrates. Has no stringent fatty acid selectivity and in addition to palmitate can also transfer onto target proteins myristate from tetradecanoyl-CoA and stearate from octadecanoyl-CoA. May thereby regulate target proteins association and localization to membranes. In the nervous system, probably catalyzes the palmitoylation of synaptic proteins and is involved in the differentiation of dopaminergic neurons and the development of the diencephalon. This Xenopus laevis (African clawed frog) protein is Palmitoyltransferase ZDHHC15 (zdhhc15).